Here is a 500-residue protein sequence, read N- to C-terminus: Neuronal acetylcholine receptor subunit beta-2 (500 aa).

A signal peptide spans 1–24 (MAGHSNSMALFSFSLLWLCSGVLG). The Extracellular segment spans residues 25–237 (TDTEERLVEH…IIRRKPLFYT (213 aa)). Residues N50 and N167 are each glycosylated (N-linked (GlcNAc...) asparagine). C154 and C168 are disulfide-bonded. The helical transmembrane segment at 238 to 258 (INLIIPCVLITSLAILVFYLP) threads the bilayer. Topologically, residues 259–266 (SDCGEKMT) are cytoplasmic. A helical membrane pass occupies residues 267-287 (LCISVLLALTVFLLLISKIVP). Residues 288–299 (PTSLDVPLVGKY) lie on the Extracellular side of the membrane. A helical transmembrane segment spans residues 300 to 320 (LMFTMVLVTFSIVTSVCVLNV). Topologically, residues 321 to 458 (HHRSPTTHTM…WKYVAMVIDR (138 aa)) are cytoplasmic. Residues 459–479 (LFLWIFVFVCVFGTVGMFLQP) form a helical membrane-spanning segment.

The protein belongs to the ligand-gated ion channel (TC 1.A.9) family. Acetylcholine receptor (TC 1.A.9.1) subfamily. Beta-2/CHRNB2 sub-subfamily. In terms of assembly, neuronal AChR is a heteropentamer composed of two different types of subunits: alpha and beta. CHRNB2/Beta-2 subunit can be combined to CHRNA2/alpha-2, CHRNA3/alpha-3 or CHRNA4/alpha-4, CHRNA5/alpha-5, CHRNA6/alpha-6 and CHRNB3/beta-3 to give rise to functional receptors. CHRNA2:CHRNB2 and CHRNA4:CHRNB2 nAChR complexes exist in two subtypes: LS (low agonist sensitivity) with a (CHRNA2/4)3:(CHRNB2)2 and HS (high agonist sensitivity) with a (CHRNA2/4)2:(CHRNB2)3 stoichiometry; the subtypes differ in their subunit binding interfaces which are involved in ligand binding. Cells produce predominantly an (CHRNA4)3:(CHRNB2)2 nAChR. The stoichiometric form (CHRNA4)2:(CHRNB2)3 expression is selectively up-regulated by nicotine and has lower single channel conductance and calcium permeability. Also part of the stoichiometric forms: (CHRNA4:CHRNB2)2:CHRNB3 or (CHRNA6:CHRNB2)2:CHRNB3. Can form heteropentamers with CHRNA7, mainly found in basal forebrain cholinergic neurons. Interacts with RIC3; which is required for proper folding and assembly. Interacts with LYPD6. Expressed in most regions of the CNS.

Its subcellular location is the synaptic cell membrane. The protein resides in the cell membrane. It catalyses the reaction Ca(2+)(in) = Ca(2+)(out). The catalysed reaction is K(+)(in) = K(+)(out). The enzyme catalyses Na(+)(in) = Na(+)(out). Activated by a myriad of ligands such as acetylcholine, cytisine, nicotine, choline and epibatidine. Channel potentiation by calcium is stoichiometry-selective, CHRNA4:CHRNB2 nACh receptor is achieved by calcium association with topographically distinct sites framed by anionic residues within the CHRNA4 subunit and between the CHRNA4 and CHRNB2 subunits. Oligomeric amyloid-beta protein 42 activates specifially CHRNA7:CHRNB2 nAchRs. nAChR activity is inhibited by the antagonist alpha-conotoxins BuIA, PnIA, PnIC, GID and MII, small disulfide-constrained peptides from cone snails. Functionally, component of neuronal acetylcholine receptors (nAChRs) that function as pentameric, ligand-gated cation channels with high calcium permeability among other activities. nAChRs are excitatory neurotrasnmitter receptors formed by a collection of nAChR subunits known to mediate synaptic transmission in the nervous system and the neuromuscular junction. Each nAchR subunit confers differential attributes to channel properties, including activation, deactivation and desensitization kinetics, pH sensitivity, cation permeability, and binding to allosteric modulators. CHRNB2 forms heteropentameric neuronal acetylcholine receptors with CHRNA2, CHRNA3, CHRNA4 and CHRNA6, as well as CHRNA5 and CHRNB3 as accesory subunits. Found in two major stoichiometric forms,(CHRNA4)3:(CHRNB2)2 and (CHRNA4)2:(CHRNB2)3, the two stoichiometric forms differ in their unitary conductance, calcium permeability, ACh sensitivity and potentiation by divalent cation. Heteropentameric channels with CHRNA6 and CHRNA4 exhibit high sensitivity to ACh and nicotine and are predominantly expressed in only a few brain areas, including dopaminergic neurons, norepirephrine neurons and cells of the visual system. nAChrs containing CHRNA6 subunits mediate endogenous cholinergic modulation of dopamine and gamma-aminobutyric acid (GABA) release in response to nicotine at nerve terminals. Also forms functional nAChRs with other subunits such as CHRNA7:CHRNB2, mainly expressed in basal forebrain cholinergic neurons. The polypeptide is Neuronal acetylcholine receptor subunit beta-2 (Chrnb2) (Rattus norvegicus (Rat)).